We begin with the raw amino-acid sequence, 317 residues long: Ribose-phosphate pyrophosphokinase (317 aa).

Residues 43–45 (DGE) and 102–103 (RQ) contribute to the ATP site. His-136 and Asp-175 together coordinate Mg(2+). Lys-198 is an active-site residue. Residues Arg-200, Asp-224, and 228 to 232 (DTAGT) contribute to the D-ribose 5-phosphate site.

The protein belongs to the ribose-phosphate pyrophosphokinase family. Class I subfamily. As to quaternary structure, homohexamer. Mg(2+) serves as cofactor.

Its subcellular location is the cytoplasm. The enzyme catalyses D-ribose 5-phosphate + ATP = 5-phospho-alpha-D-ribose 1-diphosphate + AMP + H(+). Its pathway is metabolic intermediate biosynthesis; 5-phospho-alpha-D-ribose 1-diphosphate biosynthesis; 5-phospho-alpha-D-ribose 1-diphosphate from D-ribose 5-phosphate (route I): step 1/1. Functionally, involved in the biosynthesis of the central metabolite phospho-alpha-D-ribosyl-1-pyrophosphate (PRPP) via the transfer of pyrophosphoryl group from ATP to 1-hydroxyl of ribose-5-phosphate (Rib-5-P). This is Ribose-phosphate pyrophosphokinase from Corynebacterium ammoniagenes (Brevibacterium ammoniagenes).